The chain runs to 568 residues: WW domain-containing protein A (568 aa).

The C2 domain maps to 6–129; sequence PLNNSNGSNS…TGPISHDVVF (124 aa). The WW 1 domain maps to 325–359; the sequence is VKLPDGWESRIDPVSGKVFYLNHNNKTTSWISPLE. The disordered stretch occupies residues 376 to 461; it reads TILDNNNNNN…SRPKKTPATP (86 aa). Low complexity predominate over residues 380 to 418; it reads NNNNNNNNNNNNNNNNNNNNNNINNTNNIQQKQQAQQQP. A compositionally biased stretch (basic and acidic residues) spans 435–451; it reads QKEKEKEKEINAEDYKI. Residues 519 to 552 form the WW 2 domain; that stretch reads QGLPNGWEVRQDQFGRVFYVDHINRATTWTRPTV.

Interacts with calmodulin in the absence of Ca(2+).

It is found in the nucleus. Its subcellular location is the nucleolus. The protein localises to the cytoplasm. The protein resides in the cell cortex. It localises to the cytoskeleton. In terms of biological role, involved in regulation of actin cytoskeleton organization and cytokinesis. The sequence is that of WW domain-containing protein A from Dictyostelium discoideum (Social amoeba).